Reading from the N-terminus, the 147-residue chain is Hemoglobin subunit epsilon-2 (147 aa).

Residues 3–147 (HFTTEENVAV…VANALTHKYH (145 aa)) form the Globin domain. Heme b contacts are provided by tyrosine 64 and histidine 93.

The protein belongs to the globin family. In terms of tissue distribution, red blood cells.

In terms of biological role, hemoglobin epsilon chain is a beta-type chain found in early embryos. In Bos taurus (Bovine), this protein is Hemoglobin subunit epsilon-2 (HBE2).